A 901-amino-acid polypeptide reads, in one-letter code: Disease resistance RPP8-like protein 3 (901 aa).

The stretch at 15-56 forms a coiled coil; that stretch reads ALLNRESERLNGIDEQVDGLKRQLRGLQSLLKDADAKKHGSD. An NB-ARC domain is found at 144-453; the sequence is LQDIQREIRQ…AEGIYDGLTI (310 aa). Residues 190–197 and 385–392 each bind ATP; these read GMGGIGKT and GAQIVGKS. 3 LRR repeats span residues 567–591, 592–615, and 833–858; these read LPLLRVLDLSSVKFEGGKLPSSIGG, LIHLRFLSLHQAVVSHLPSTIRNL, and MPCLRDLIIHSCEKLEELPDGLKYVT.

The protein belongs to the disease resistance NB-LRR family. RPP8/HRT subfamily.

Disease resistance protein. The sequence is that of Disease resistance RPP8-like protein 3 (RPP8L3) from Arabidopsis thaliana (Mouse-ear cress).